The chain runs to 328 residues: Phosphate acetyltransferase (328 aa).

It belongs to the phosphate acetyltransferase and butyryltransferase family.

It is found in the cytoplasm. It carries out the reaction acetyl-CoA + phosphate = acetyl phosphate + CoA. Its pathway is metabolic intermediate biosynthesis; acetyl-CoA biosynthesis; acetyl-CoA from acetate: step 2/2. In Thermoanaerobacterium thermosaccharolyticum (strain ATCC 7956 / DSM 571 / NCIMB 9385 / NCA 3814 / NCTC 13789 / WDCM 00135 / 2032) (Clostridium thermosaccharolyticum), this protein is Phosphate acetyltransferase (pta).